The primary structure comprises 146 residues: Hemoglobin subunit beta (146 aa).

Val1 bears the N-acetylvaline mark. In terms of domain architecture, Globin spans 2–146 (HLTGEEKAAV…VANALAHKYH (145 aa)). Phosphothreonine is present on Thr12. Position 44 is a phosphoserine (Ser44). The residue at position 59 (Lys59) is an N6-acetyllysine. His63 serves as a coordination point for heme b. At Lys82 the chain carries N6-acetyllysine. His92 is a binding site for heme b. Cys93 is subject to S-nitrosocysteine. Residue Lys144 is modified to N6-acetyllysine.

Belongs to the globin family. In terms of assembly, heterotetramer of two alpha chains and two beta chains. Red blood cells.

Functionally, involved in oxygen transport from the lung to the various peripheral tissues. The polypeptide is Hemoglobin subunit beta (HBB) (Martes foina (Beech marten)).